Here is a 218-residue protein sequence, read N- to C-terminus: Octanoyltransferase (218 aa).

Positions 31-206 constitute a BPL/LPL catalytic domain; sequence REAADEVWLV…QLVKHLDYAE (176 aa). Residues 70-77, 137-139, and 150-152 contribute to the substrate site; these read RGGQVTYH, SLG, and GLA. The Acyl-thioester intermediate role is filled by C168.

Belongs to the LipB family.

It localises to the cytoplasm. The enzyme catalyses octanoyl-[ACP] + L-lysyl-[protein] = N(6)-octanoyl-L-lysyl-[protein] + holo-[ACP] + H(+). Its pathway is protein modification; protein lipoylation via endogenous pathway; protein N(6)-(lipoyl)lysine from octanoyl-[acyl-carrier-protein]: step 1/2. In terms of biological role, catalyzes the transfer of endogenously produced octanoic acid from octanoyl-acyl-carrier-protein onto the lipoyl domains of lipoate-dependent enzymes. Lipoyl-ACP can also act as a substrate although octanoyl-ACP is likely to be the physiological substrate. This is Octanoyltransferase from Pseudomonas syringae pv. syringae (strain B728a).